The sequence spans 821 residues: Serine/threonine-protein kinase RAD53 (821 aa).

Residue Ser24 is modified to Phosphoserine. In terms of domain architecture, FHA 1 spans 66–116 (WTFGRNPACDYHLGNISRLSNKHFQILLGEDGNLLLNDISTNGTWLNGQKV). A Phosphoserine modification is found at Ser175. Residues 198–466 (SIIDEVVGQG…AAKALNHPWI (269 aa)) enclose the Protein kinase domain. ATP is bound by residues 204-212 (VGQGAFATV) and Lys227. Asp319 serves as the catalytic Proton acceptor. Residues Ser547 and Ser560 each carry the phosphoserine modification. Residues 601–664 (FFIGRSEDCN…NVSYLNNNRM (64 aa)) enclose the FHA 2 domain. Positions 735–770 (AAQRANQPSASSSSMSAKKPPVSDTNNNGNNSVLND) are disordered. The segment covering 742–770 (PSASSSSMSAKKPPVSDTNNNGNNSVLND) has biased composition (low complexity). Ser774 and Ser793 each carry phosphoserine. The interval 791–821 (SLSQSQIDPSKKVKRAKLDQTSKGPENLQFS) is disordered. Positions 809–821 (DQTSKGPENLQFS) are enriched in polar residues.

It belongs to the protein kinase superfamily. CAMK Ser/Thr protein kinase family. CHEK2 subfamily. Interacts (via domain FHA 1) with PTC2 (when phosphorylated); the interaction is direct and serves to regulate DNA damage checkpoint signaling. Interacts with PIN4. Post-translationally, autophosphorylated. Phosphorylated in response to DNA double-strand breaks; dephosphorylation is mediated by PTC2 and PTC3.

It localises to the nucleus. It carries out the reaction L-seryl-[protein] + ATP = O-phospho-L-seryl-[protein] + ADP + H(+). The enzyme catalyses L-threonyl-[protein] + ATP = O-phospho-L-threonyl-[protein] + ADP + H(+). It catalyses the reaction L-tyrosyl-[protein] + ATP = O-phospho-L-tyrosyl-[protein] + ADP + H(+). With respect to regulation, inactivated by dephosphorylation via recruitment of PTC2. Functionally, controls S-phase checkpoint as well as G1 and G2 DNA damage checkpoints. Phosphorylates proteins on serine, threonine, and tyrosine. Prevents entry into anaphase and mitotic exit after DNA damage via regulation of the Polo kinase CDC5. Seems to be involved in the phosphorylation of RPH1. The sequence is that of Serine/threonine-protein kinase RAD53 (RAD53) from Saccharomyces cerevisiae (strain ATCC 204508 / S288c) (Baker's yeast).